A 143-amino-acid chain; its full sequence is MGKPKGIRAARKLKTHRQAQRWNDKGYKKAHLGTRWKANPFGTASHAKGIVLEKVGVEAKQPNSAIRKCVRVQLIKNGKKITAFVPNDGCLNFIEENDEVLVAGFGRKGHAVGDIPGVRFKIVKVANTSLIALFKGKKERPRS.

Positions 1–19 (MGKPKGIRAARKLKTHRQA) are enriched in basic residues. The interval 1-21 (MGKPKGIRAARKLKTHRQAQR) is disordered. At P62 the chain carries Hydroxyproline.

Belongs to the universal ribosomal protein uS12 family. In terms of assembly, component of the 40S small ribosomal subunit.

The protein resides in the cytoplasm. It localises to the cytosol. It is found in the rough endoplasmic reticulum. The sequence is that of Small ribosomal subunit protein uS12 (rps-23) from Brugia malayi (Filarial nematode worm).